Consider the following 268-residue polypeptide: Lectin ESA-2 (268 aa).

4 repeat units span residues 1–67 (GRYT…RRGE), 68–135 (SNVY…QSGG), 136–202 (DTYN…LSGA), and 203–268 (NNYS…VATS). The tract at residues 1–268 (GRYTVQNQWG…PIGFKGVATS (268 aa)) is 4 X approximate tandem repeats.

In terms of assembly, monomer.

Its function is as follows. Lectin specific for high mannose N-glycans, recognizes the branched moiety of these glycans. Does not recognize other types of N-glycans or monosaccharides. Agglutinates trypsin-treated sheep and rabbit erythrocytes and untreated sheep erythrocytes. Has mitogenic activity on mouse lymphocytes. Does not require metal ions for activity. The sequence is that of Lectin ESA-2 from Eucheuma serra (Marine red alga).